Reading from the N-terminus, the 503-residue chain is Chromodomain Y-like protein 2 (503 aa).

The region spanning 7–67 (YEVERIVDKR…LHLSKDKRVK (61 aa)) is the Chromo domain. Residues 66–177 (VKSGKQAGAS…GNGSHQPDLE (112 aa)) are disordered. Basic and acidic residues predominate over residues 88–98 (RLSHRPLEPGK). The span at 101 to 120 (PSSHKRKRVNSPLSRPKKGS) shows a compositional bias: basic residues. The span at 130–140 (KTVSYRTTPSG) shows a compositional bias: polar residues.

As to quaternary structure, interacts (via chromo domain) with histone H3K9me3.

The protein localises to the nucleus. The protein is Chromodomain Y-like protein 2 (Cdyl2) of Mus musculus (Mouse).